The chain runs to 927 residues: 2-oxoadipate dehydrogenase complex component E1 (927 aa).

The protein belongs to the alpha-ketoglutarate dehydrogenase family. In terms of assembly, the 2-oxoadipate dehydrogenase complex is composed of OADH (2-oxoadipate dehydrogenase; E1a), DLST (dihydrolipoamide succinyltransferase; E2) and DLD (dihydrolipoamide dehydrogenase; E3). E1a functional unit is a dimer. It depends on thiamine diphosphate as a cofactor.

Its subcellular location is the mitochondrion. The enzyme catalyses N(6)-[(R)-lipoyl]-L-lysyl-[protein] + 2-oxoadipate + H(+) = N(6)-[(R)-S(8)-glutaryldihydrolipoyl]-L-lysyl-[protein] + CO2. The protein operates within amino-acid degradation. Its function is as follows. 2-oxoadipate dehydrogenase (E1a) component of the 2-oxoadipate dehydrogenase complex (OADHC). Participates in the first step, rate limiting for the overall conversion of 2-oxoadipate (alpha-ketoadipate) to glutaryl-CoA and CO(2) catalyzed by the whole OADHC. Catalyzes the irreversible decarboxylation of 2-oxoadipate via the thiamine diphosphate (ThDP) cofactor and subsequent transfer of the decarboxylated acyl intermediate on an oxidized dihydrolipoyl group that is covalently amidated to the E2 enzyme (dihydrolipoyllysine-residue succinyltransferase or DLST). Can catalyze the decarboxylation of 2-oxoglutarate in vitro, but at a much lower rate than 2-oxoadipate. Responsible for the last step of L-lysine, L-hydroxylysine and L-tryptophan catabolism with the common product being 2-oxoadipate. This chain is 2-oxoadipate dehydrogenase complex component E1 (dhtkd1), found in Xenopus laevis (African clawed frog).